A 486-amino-acid chain; its full sequence is Cysteine--tRNA ligase (486 aa).

C29 contributes to the Zn(2+) binding site. The 'HIGH' region signature appears at V31 to H41. C217, H242, and E246 together coordinate Zn(2+). The 'KMSKS' region signature appears at K274 to S278. Residue K277 coordinates ATP.

This sequence belongs to the class-I aminoacyl-tRNA synthetase family. Monomer. Zn(2+) is required as a cofactor.

It is found in the cytoplasm. It carries out the reaction tRNA(Cys) + L-cysteine + ATP = L-cysteinyl-tRNA(Cys) + AMP + diphosphate. The sequence is that of Cysteine--tRNA ligase from Thermosynechococcus vestitus (strain NIES-2133 / IAM M-273 / BP-1).